Here is a 519-residue protein sequence, read N- to C-terminus: T-complex protein 11-like protein 2 (519 aa).

Residues 1-57 are disordered; the sequence is MPFNGEKQCVSEDQPSDSDSSRFSESMASLSDYECSRQSFTSDSSSKSSSPASTSPP. Phosphoserine is present on serine 16. Composition is skewed to low complexity over residues 17–29 and 36–55; these read DSDSSRFSESMAS and SRQSFTSDSSSKSSSPASTS.

This sequence belongs to the TCP11 family. In terms of assembly, interacts with FMNL2; this interaction promotes muscle-derived satellite cell (MDSC) migration and differentiation.

It is found in the cytoplasm. It localises to the cytoskeleton. In terms of biological role, promotes the migration of muscle-derived satellite cells (MDSCs) during differentiation throught interaction with FMNL2 and therefore may participate in microfilament assembly. This is T-complex protein 11-like protein 2 from Bos taurus (Bovine).